The sequence spans 236 residues: Small ribosomal subunit protein uS2c (236 aa).

This sequence belongs to the universal ribosomal protein uS2 family.

It is found in the plastid. This is Small ribosomal subunit protein uS2c (rps2) from Cuscuta obtusiflora (Peruvian dodder).